The primary structure comprises 707 residues: Elongation factor G (707 aa).

The 290-residue stretch at 8 to 297 (ERVRNIGIAA…AVVDYLPSPV (290 aa)) folds into the tr-type G domain. GTP-binding positions include 17–24 (AHIDAGKT), 96–100 (DTPGH), and 150–153 (NKMD).

Belongs to the TRAFAC class translation factor GTPase superfamily. Classic translation factor GTPase family. EF-G/EF-2 subfamily.

The protein localises to the cytoplasm. In terms of biological role, catalyzes the GTP-dependent ribosomal translocation step during translation elongation. During this step, the ribosome changes from the pre-translocational (PRE) to the post-translocational (POST) state as the newly formed A-site-bound peptidyl-tRNA and P-site-bound deacylated tRNA move to the P and E sites, respectively. Catalyzes the coordinated movement of the two tRNA molecules, the mRNA and conformational changes in the ribosome. The protein is Elongation factor G of Synechococcus sp. (strain JA-2-3B'a(2-13)) (Cyanobacteria bacterium Yellowstone B-Prime).